We begin with the raw amino-acid sequence, 293 residues long: ATP synthase gamma chain (293 aa).

Belongs to the ATPase gamma chain family. As to quaternary structure, F-type ATPases have 2 components, CF(1) - the catalytic core - and CF(0) - the membrane proton channel. CF(1) has five subunits: alpha(3), beta(3), gamma(1), delta(1), epsilon(1). CF(0) has three main subunits: a, b and c.

The protein resides in the cell inner membrane. In terms of biological role, produces ATP from ADP in the presence of a proton gradient across the membrane. The gamma chain is believed to be important in regulating ATPase activity and the flow of protons through the CF(0) complex. In Allorhizobium ampelinum (strain ATCC BAA-846 / DSM 112012 / S4) (Agrobacterium vitis (strain S4)), this protein is ATP synthase gamma chain.